The following is a 212-amino-acid chain: Protein-L-isoaspartate O-methyltransferase (212 aa).

S60 is an active-site residue.

This sequence belongs to the methyltransferase superfamily. L-isoaspartyl/D-aspartyl protein methyltransferase family.

The protein localises to the cytoplasm. It carries out the reaction [protein]-L-isoaspartate + S-adenosyl-L-methionine = [protein]-L-isoaspartate alpha-methyl ester + S-adenosyl-L-homocysteine. Functionally, catalyzes the methyl esterification of L-isoaspartyl residues in peptides and proteins that result from spontaneous decomposition of normal L-aspartyl and L-asparaginyl residues. It plays a role in the repair and/or degradation of damaged proteins. The protein is Protein-L-isoaspartate O-methyltransferase of Methylorubrum populi (strain ATCC BAA-705 / NCIMB 13946 / BJ001) (Methylobacterium populi).